The primary structure comprises 813 residues: DNA gyrase subunit A (813 aa).

The 467-residue stretch at 38 to 504 (LPDVRDGLKP…EIEYLDVEDF (467 aa)) folds into the Topo IIA-type catalytic domain. Catalysis depends on Tyr126, which acts as the O-(5'-phospho-DNA)-tyrosine intermediate. Positions 531–537 (QNRGGKG) match the GyrA-box motif.

Belongs to the type II topoisomerase GyrA/ParC subunit family. In terms of assembly, heterotetramer, composed of two GyrA and two GyrB chains. In the heterotetramer, GyrA contains the active site tyrosine that forms a transient covalent intermediate with DNA, while GyrB binds cofactors and catalyzes ATP hydrolysis.

It is found in the cytoplasm. The catalysed reaction is ATP-dependent breakage, passage and rejoining of double-stranded DNA.. A type II topoisomerase that negatively supercoils closed circular double-stranded (ds) DNA in an ATP-dependent manner to modulate DNA topology and maintain chromosomes in an underwound state. Negative supercoiling favors strand separation, and DNA replication, transcription, recombination and repair, all of which involve strand separation. Also able to catalyze the interconversion of other topological isomers of dsDNA rings, including catenanes and knotted rings. Type II topoisomerases break and join 2 DNA strands simultaneously in an ATP-dependent manner. The sequence is that of DNA gyrase subunit A from Treponema pallidum (strain Nichols).